We begin with the raw amino-acid sequence, 580 residues long: MDYPKMDYFLDVESAHRLLDVESAQRFFYSQGAQARRATLLLPPTLMAASSEDDIDRRPIRRVRSKSDTPYLAEARISFNLGAAEEVERLAAMRSDSLVPGTHTPPIRRRSKFANLGRIFKPWKWRKKKSEKFKHTSAALERKISMRQSREELIKRGVLKEIYDKDGELSISNEDDSLTNGQSLSSSQLSLPALSEMEPVPMPRDPCSYEVLQASDIMDGPDPGAPVKLPCLPVKLSPPLPPKKVLICMPVGGPELSLASYAAQKSSQQAVAQHHHTVLPSQMQHQLQYGSHGQHLPSSTGTLPMHPSGCRMIDELNKTLAMTMQRLESSEQRVPCSTSYHSSGLHSSDGVTKAGPLGLPEIRQVPTVVIECDDNKENVPHEPDYEDSSCLYAREEEEEEEDEDDDASLYTSSLAMKVCRKDSLAIKLSNRPSKRELEEKNILPRQTDEERLELRQQIGTKLTRRLSQRPTAEELEQRNILKPRNEQEEQEEKREIKRRLTRKLSQRPTVEELRERKILIRFSDYVEVADAQDYDRRADKPWTRLTAADKAAIRKELNEFKSTEMEVHELSRHLTRFHRP.

Phosphoserine is present on residues Ser67 and Ser78. Position 104 is a phosphothreonine (Thr104). A Nuclear localization signal motif is present at residues 108 to 129 (RRRSKFANLGRIFKPWKWRKKK). One copy of the RPEL 1 repeat lies at 138-163 (AALERKISMRQSREELIKRGVLKEIY). The interval 331 to 351 (EQRVPCSTSYHSSGLHSSDGV) is disordered. Residues 337–348 (STSYHSSGLHSS) show a composition bias toward low complexity. RPEL repeat units follow at residues 422–447 (DSLA…PRQT), 460–485 (TKLT…KPRN), and 498–523 (RRLT…IRFS). The disordered stretch occupies residues 462–494 (LTRRLSQRPTAEELEQRNILKPRNEQEEQEEKR). Residue Ser467 is modified to Phosphoserine. Over residues 471–494 (TAEELEQRNILKPRNEQEEQEEKR) the composition is skewed to basic and acidic residues. Ser505 carries the post-translational modification Phosphoserine.

It belongs to the phosphatase and actin regulator family. In terms of assembly, interacts (via RPEL repeats) with ACTA1 and PPP1CA; ACTA1 and PPP1CA compete for the same binding site. In terms of tissue distribution, selectively expressed in brain. High levels are found in the olfactory tubercle, nucleus accumbens core and shell, caudate-putamen, cerebral cortex, hippocampus and piriform cortex. Moderate to high levels in the olfactory bulb, arcuate and ventromedial hypothalamus, subthalamic nucleus, amygdala, lateral septum, habenula and thalamus. Low expression, if any, in substantia nigra pars compacta/pars reticula and globus pallidus (at protein level).

It localises to the cytoplasm. The protein resides in the synapse. It is found in the nucleus. Binds actin monomers (G actin) and plays a role in multiple processes including the regulation of actin cytoskeleton dynamics, actin stress fibers formation, cell motility and survival, formation of tubules by endothelial cells, and regulation of PPP1CA activity. Involved in the regulation of cortical neuron migration and dendrite arborization. In Rattus norvegicus (Rat), this protein is Phosphatase and actin regulator 1 (Phactr1).